A 179-amino-acid polypeptide reads, in one-letter code: Photosystem I assembly protein Ycf4 (179 aa).

The next 2 membrane-spanning stretches (helical) occupy residues 21-41 and 59-79; these read LISF…YLGV and IVMT…LLNI.

The protein belongs to the Ycf4 family.

The protein resides in the plastid. It localises to the chloroplast thylakoid membrane. Functionally, seems to be required for the assembly of the photosystem I complex. This Rhodomonas salina (Cryptomonas salina) protein is Photosystem I assembly protein Ycf4.